We begin with the raw amino-acid sequence, 420 residues long: Corticotropin-releasing factor receptor 1 (420 aa).

Residues 1-28 (MVPGPRPALLLLLFLLQAFLLWDSPVAA) form the signal peptide. Topologically, residues 29–116 (SIQEQYCESL…CQEILSEEKR (88 aa)) are extracellular. Cystine bridges form between Cys35–Cys59, Cys49–Cys92, and Cys73–Cys107. N-linked (GlcNAc...) asparagine glycans are attached at residues Asn43, Asn50, Asn83, Asn95, and Asn103. The chain crosses the membrane as a helical span at residues 117–147 (SKLHYHIAVIINYLGHCVSLGTLLVAFVLFM). Residues 148–154 (RLRSIRC) lie on the Cytoplasmic side of the membrane. The chain crosses the membrane as a helical span at residues 155-179 (LRNIIHWNLITAFILRNATWFVVQL). The Extracellular segment spans residues 180 to 194 (TMNPEVHESNVVWCR). The cysteines at positions 193 and 263 are disulfide-linked. A helical membrane pass occupies residues 195-223 (LVTAAYNYFHVTNFFWMFGEGCYLHTAIV). Residues 224-230 (LTYSTDK) lie on the Cytoplasmic side of the membrane. A helical transmembrane segment spans residues 231–258 (LRKWMFICIGWCIPFPIIVAWAIGKLYY). The Extracellular portion of the chain corresponds to 259–274 (DNEKCWFGKRAGVYTD). A helical membrane pass occupies residues 275-300 (YIYQGPMILVLLINFIFLFNIVRILM). At 301–311 (TKLRASTTSET) the chain is on the cytoplasmic side. The chain crosses the membrane as a helical span at residues 312 to 336 (IQYRKAVKATLVLLSLLGITYMLFF). Residues 337–343 (VNPGEDE) lie on the Extracellular side of the membrane. Residues 344 to 373 (ISRIVFIYFNSFLESFQGFFVSVFYCFLNS) form a helical membrane-spanning segment. Residues 374–420 (EVRSAVRKRWHRWQDKHSIRARVARAMSIPTSPTRVSFHSIKQSSAV) are Cytoplasmic-facing.

It belongs to the G-protein coupled receptor 2 family. In terms of assembly, interacts (via N-terminal extracellular domain) with CRF and UCN.

The protein localises to the cell membrane. G-protein coupled receptor for CRH (corticotropin-releasing factor) and UCN (urocortin). Has high affinity for CRH and UCN. Ligand binding causes a conformation change that triggers signaling via guanine nucleotide-binding proteins (G proteins) and down-stream effectors, such as adenylate cyclase. Promotes the activation of adenylate cyclase, leading to increased intracellular cAMP levels. This chain is Corticotropin-releasing factor receptor 1 (CRHR1), found in Gallus gallus (Chicken).